A 384-amino-acid chain; its full sequence is uncharacterized protein (384 aa).

Transmembrane regions (helical) follow at residues Leu11–Ile31, Trp33–Met53, Leu66–Leu86, Phe94–Leu114, Leu153–Ile173, Leu197–Ala217, Ala224–Val244, Ile284–Val304, Leu309–Met329, and Phe342–Tyr362.

This sequence belongs to the AbrB family.

It localises to the cell membrane. This is an uncharacterized protein from Bacillus subtilis (strain 168).